Reading from the N-terminus, the 52-residue chain is MDKVQYLTRSAIRRASTIEMPQQARQNLQNLFINFCLILICLLLICIIVMLL.

Position 1 is an N-acetylmethionine (Met1). Residues 1–31 (MDKVQYLTRSAIRRASTIEMPQQARQNLQNL) are Cytoplasmic-facing. A Phosphoserine; by PKA and DMPK modification is found at Ser16. Thr17 bears the Phosphothreonine; by CaMK2 mark. The chain crosses the membrane as a helical span at residues 32 to 52 (FINFCLILICLLLICIIVMLL). Cys36 carries S-palmitoyl cysteine lipidation.

Belongs to the phospholamban family. Homopentamer. Can also form heterooligomers with other sarcoplasmic/endoplasmic reticulum calcium ATPase (SERCA) regulators ARLN, ERLN, SLN and STRIT1/DWORF. Monomer. Interacts with HAX1. Interacts as a monomer with ATP2A2; the interaction decreases ATP2A2 Ca(2+) affinity. Interacts with VMP1; VMP1 competes with PLN and SLN to prevent them from forming an inhibitory complex with ATP2A2. Interacts with S100A1 in a Ca(2+)-dependent manner. In terms of processing, phosphorylation by DMPK may stimulate sarcoplasmic reticulum calcium uptake in cardiomyocytes. Phosphorylation by PKA abolishes the inhibition of ATP2A2-mediated calcium uptake. Phosphorylated at Thr-17 by CaMK2, and in response to beta-adrenergic stimulation. Post-translationally, palmitoylated by ZDHHC16, promoting formation of the homopentamer. In elongated spermatids, proteolytically cleaved by SPPL2C which modulates intracellular Ca(2+) homeostasis. In terms of tissue distribution, heart.

The protein localises to the endoplasmic reticulum membrane. It localises to the sarcoplasmic reticulum membrane. The protein resides in the mitochondrion membrane. It is found in the membrane. Functionally, reversibly inhibits the activity of ATP2A2/SERCA2 in cardiac sarcoplasmic reticulum by decreasing the apparent affinity of the ATPase for Ca(2+). Binds preferentially to the ATP-bound E1 conformational form of ATP2A2 which predominates at low Ca(2+) concentrations during the diastolic phase of the cardiac cycle. Inhibits ATP2A2 Ca(2+) affinity by disrupting its allosteric activation by ATP. Modulates the contractility of the heart muscle in response to physiological stimuli via its effects on ATP2A2. Modulates calcium re-uptake during muscle relaxation and plays an important role in calcium homeostasis in the heart muscle. The degree of ATP2A2 inhibition depends on the oligomeric state of PLN. ATP2A2 inhibition is alleviated by PLN phosphorylation. Also inhibits the activity of ATP2A3/SERCA3. Controls intracellular Ca(2+) levels in elongated spermatids and may play a role in germ cell differentiation. In the thalamic reticular nucleus of the brain, plays a role in the regulation of sleep patterns and executive functioning. The polypeptide is Phospholamban (Canis lupus familiaris (Dog)).